The primary structure comprises 397 residues: Heterogeneous nuclear ribonucleoprotein K homolog (397 aa).

The disordered stretch occupies residues Met1 to Phe41. Residues Lys16–Thr30 are compositionally biased toward basic and acidic residues. KH domains are found at residues Lys49–Val111 and Pro124–Val189. The segment at Gly220 to Gly279 is disordered. Low complexity predominate over residues Gly224–Arg241. The KH 3 domain maps to Val316–Leu379.

In terms of assembly, interacts with alg-1; the interaction is direct and may be strengthened through RNA-protein association. In terms of tissue distribution, expressed in gut, muscle, neuronal and hypodermal tissues. Highly expressed in the germline and oocytes.

The protein resides in the nucleus. The protein localises to the cytoplasm. In terms of biological role, RNA-binding protein which functions together with alg-1, a component of the miRNA loading complex, to modulate the processing and activity of specific miRNAs such as miR-58 and let-7 to regulate gene expression at the post-transcriptional level during embryonic, hypodermal and neuronal development. Promotes the lsy-6-mediated repression of cog-1 in uterine cells. In embryos, may play a role in the DNA damage response. In Caenorhabditis elegans, this protein is Heterogeneous nuclear ribonucleoprotein K homolog.